A 315-amino-acid polypeptide reads, in one-letter code: WD repeat domain-containing protein 83 (315 aa).

7 WD repeats span residues 23–62 (CGQGAVRAVRFNVDGNYCLTCGSDKTLKLWNPLRGTLLRT), 65–104 (GHGYEVLDAAGSFDNSHLCSGGGDKTVVLWDVATGQVVRK), 107–146 (GHAGKVNTVQFNEEATVILSGSIDSSVRCWDCRSRKPEPV), 151–188 (EARDGISSVKVSDHEILAGSVDGRVRRYDLRMGQVTSD), 190–228 (VGSPITCTCFSRDGQCTLISSLDSTLRLLDKDTGELLGE), 231–272 (GHKN…LALA), and 275–313 (VGSNVVQSLAYHPADPCLLTAMGGSIQYWREETYEAEGG).

The protein belongs to the WD repeat MORG1 family. As to quaternary structure, interacts with EGLN3/PHD3. Interacts with ERK signaling proteins MAP2K1/MEK1, MAP2K2/MEK2, LAMTOR3, ARAF/Raf-1, MAPK1/ERK2 and MAPK3/ERK1. Identified in the spliceosome C complex. Interacts with PARD6B and CRB3. Interacts strongly with GTP-bound RRAGA but not with inactive GDP-bound. Interacts with p62/SQSTM1. In terms of tissue distribution, highly expressed in testis and brain. Expressed at intermediate level in heart, liver and kidney. Weakly expressed in spleen and lung and absent in muscle.

The protein localises to the cytoplasm. It is found in the lysosome. It localises to the nucleus. In terms of biological role, molecular scaffold protein for various multimeric protein complexes. Acts as a module in the assembly of a multicomponent scaffold for the ERK pathway, linking ERK responses to specific agonists. At low concentrations it enhances ERK activation, whereas high concentrations lead to the inhibition of ERK activation. Also involved in response to hypoxia by acting as a negative regulator of HIF1A/HIF-1-alpha via its interaction with EGLN3/PHD3. May promote degradation of HIF1A. May act by recruiting signaling complexes to a specific upstream activator. May also be involved in pre-mRNA splicing. Participates in tight junction development by regulating apico-basal polarity, a key step in tissue development and organization. Mechanistically, regulates the translocation of PAR6-aPKC from the cytoplasm to the apical surface by acting as an adapter between PARD6B AND CRB3. Also acts as a negative regulator of mTORC1 under nutrient-rich conditions by binding to the active Rag GTPases to inhibit mTORC1 localization to the lysosome and phosphorylation of downstream targets. This facilitates constitutive basal autophagy during nutrient availability. The sequence is that of WD repeat domain-containing protein 83 (Wdr83) from Rattus norvegicus (Rat).